A 330-amino-acid chain; its full sequence is Ribosomal RNA small subunit methyltransferase H (330 aa).

Residues 50-52, Asp-69, Leu-103, Asp-117, and Gln-124 contribute to the S-adenosyl-L-methionine site; that span reads GGH.

Belongs to the methyltransferase superfamily. RsmH family.

The protein resides in the cytoplasm. It catalyses the reaction cytidine(1402) in 16S rRNA + S-adenosyl-L-methionine = N(4)-methylcytidine(1402) in 16S rRNA + S-adenosyl-L-homocysteine + H(+). Functionally, specifically methylates the N4 position of cytidine in position 1402 (C1402) of 16S rRNA. This chain is Ribosomal RNA small subunit methyltransferase H, found in Saccharopolyspora erythraea (strain ATCC 11635 / DSM 40517 / JCM 4748 / NBRC 13426 / NCIMB 8594 / NRRL 2338).